The primary structure comprises 373 residues: Alanine racemase (373 aa).

The active-site Proton acceptor; specific for D-alanine is the Lys-40. An N6-(pyridoxal phosphate)lysine modification is found at Lys-40. Arg-140 serves as a coordination point for substrate. Catalysis depends on Tyr-268, which acts as the Proton acceptor; specific for L-alanine. Residue Met-315 coordinates substrate.

The protein belongs to the alanine racemase family. Pyridoxal 5'-phosphate is required as a cofactor.

The catalysed reaction is L-alanine = D-alanine. Its pathway is amino-acid biosynthesis; D-alanine biosynthesis; D-alanine from L-alanine: step 1/1. Functionally, catalyzes the interconversion of L-alanine and D-alanine. May also act on other amino acids. The protein is Alanine racemase (alr) of Limosilactobacillus fermentum (strain NBRC 3956 / LMG 18251) (Lactobacillus fermentum).